We begin with the raw amino-acid sequence, 464 residues long: PH domain-containing rcdII (464 aa).

Residues 8–210 are a coiled coil; that stretch reads KSSKEIIEDL…NTKLMSNLEI (203 aa). Disordered stretches follow at residues 215 to 290 and 317 to 347; these read NFNN…NSSG and CNNNNNNNNGNSKLSTGVPITRSRSSSSNSN. Composition is skewed to low complexity over residues 234–288, 317–328, and 338–347; these read STTT…SSNS, CNNNNNNNNGNS, and RSRSSSSNSN. One can recognise a PH domain in the interval 353 to 461; it reads KIVKEGWLKR…WKDTISSLMP (109 aa).

The sequence is that of PH domain-containing rcdII (rcdII) from Dictyostelium discoideum (Social amoeba).